Here is a 360-residue protein sequence, read N- to C-terminus: Phosphoserine aminotransferase (360 aa).

Arg42 is a binding site for L-glutamate. Pyridoxal 5'-phosphate contacts are provided by residues 76–77 (AR), Trp102, Thr152, Asp172, and Gln195. Position 196 is an N6-(pyridoxal phosphate)lysine (Lys196). Residue 237–238 (NT) coordinates pyridoxal 5'-phosphate.

It belongs to the class-V pyridoxal-phosphate-dependent aminotransferase family. SerC subfamily. As to quaternary structure, homodimer. It depends on pyridoxal 5'-phosphate as a cofactor.

It localises to the cytoplasm. It carries out the reaction O-phospho-L-serine + 2-oxoglutarate = 3-phosphooxypyruvate + L-glutamate. It catalyses the reaction 4-(phosphooxy)-L-threonine + 2-oxoglutarate = (R)-3-hydroxy-2-oxo-4-phosphooxybutanoate + L-glutamate. It functions in the pathway amino-acid biosynthesis; L-serine biosynthesis; L-serine from 3-phospho-D-glycerate: step 2/3. It participates in cofactor biosynthesis; pyridoxine 5'-phosphate biosynthesis; pyridoxine 5'-phosphate from D-erythrose 4-phosphate: step 3/5. Catalyzes the reversible conversion of 3-phosphohydroxypyruvate to phosphoserine and of 3-hydroxy-2-oxo-4-phosphonooxybutanoate to phosphohydroxythreonine. The protein is Phosphoserine aminotransferase of Pasteurella multocida (strain Pm70).